The sequence spans 370 residues: Putative agmatine deiminase (370 aa).

Residue C361 is the Amidino-cysteine intermediate of the active site.

The protein belongs to the agmatine deiminase family.

The enzyme catalyses agmatine + H2O = N-carbamoylputrescine + NH4(+). This is Putative agmatine deiminase from Shewanella baltica (strain OS185).